A 135-amino-acid polypeptide reads, in one-letter code: Large ribosomal subunit protein uL16c (135 aa).

The protein belongs to the universal ribosomal protein uL16 family. Part of the 50S ribosomal subunit.

It localises to the plastid. The protein localises to the chloroplast. This Platanus occidentalis (Sycamore) protein is Large ribosomal subunit protein uL16c.